Consider the following 74-residue polypeptide: ATP synthase subunit c (74 aa).

The next 2 membrane-spanning stretches (helical) occupy residues 8 to 28 and 52 to 72; these read FIGI…VSNI and IGAG…MLLI.

This sequence belongs to the ATPase C chain family. F-type ATPases have 2 components, F(1) - the catalytic core - and F(0) - the membrane proton channel. F(1) has five subunits: alpha(3), beta(3), gamma(1), delta(1), epsilon(1). F(0) has three main subunits: a(1), b(2) and c(10-14). The alpha and beta chains form an alternating ring which encloses part of the gamma chain. F(1) is attached to F(0) by a central stalk formed by the gamma and epsilon chains, while a peripheral stalk is formed by the delta and b chains.

The protein resides in the cell inner membrane. Functionally, f(1)F(0) ATP synthase produces ATP from ADP in the presence of a proton or sodium gradient. F-type ATPases consist of two structural domains, F(1) containing the extramembraneous catalytic core and F(0) containing the membrane proton channel, linked together by a central stalk and a peripheral stalk. During catalysis, ATP synthesis in the catalytic domain of F(1) is coupled via a rotary mechanism of the central stalk subunits to proton translocation. Its function is as follows. Key component of the F(0) channel; it plays a direct role in translocation across the membrane. A homomeric c-ring of between 10-14 subunits forms the central stalk rotor element with the F(1) delta and epsilon subunits. The chain is ATP synthase subunit c from Rickettsia akari (strain Hartford).